The chain runs to 458 residues: Bifunctional protein GlmU (458 aa).

The segment at 1-231 (MSNRALSVVV…QTEVEGVNNR (231 aa)) is pyrophosphorylase. UDP-N-acetyl-alpha-D-glucosamine contacts are provided by residues 11 to 14 (LAAG), Lys-25, Gln-78, 83 to 84 (GT), 105 to 107 (YGD), Gly-142, Glu-156, Asn-171, and Asn-229. Asp-107 contacts Mg(2+). Asn-229 contacts Mg(2+). The tract at residues 232–252 (LQLARLERLFQREQAERLLLA) is linker. The interval 253–458 (GVMLSDPDRF…ANWTRPVKKK (206 aa)) is N-acetyltransferase. Residues Arg-335 and Lys-353 each contribute to the UDP-N-acetyl-alpha-D-glucosamine site. The active-site Proton acceptor is the His-365. 2 residues coordinate UDP-N-acetyl-alpha-D-glucosamine: Tyr-368 and Asn-379. Acetyl-CoA contacts are provided by residues Ala-382, 388-389 (NY), Ser-407, Ala-425, and Arg-442.

This sequence in the N-terminal section; belongs to the N-acetylglucosamine-1-phosphate uridyltransferase family. In the C-terminal section; belongs to the transferase hexapeptide repeat family. In terms of assembly, homotrimer. Mg(2+) is required as a cofactor.

The protein localises to the cytoplasm. It carries out the reaction alpha-D-glucosamine 1-phosphate + acetyl-CoA = N-acetyl-alpha-D-glucosamine 1-phosphate + CoA + H(+). The catalysed reaction is N-acetyl-alpha-D-glucosamine 1-phosphate + UTP + H(+) = UDP-N-acetyl-alpha-D-glucosamine + diphosphate. The protein operates within nucleotide-sugar biosynthesis; UDP-N-acetyl-alpha-D-glucosamine biosynthesis; N-acetyl-alpha-D-glucosamine 1-phosphate from alpha-D-glucosamine 6-phosphate (route II): step 2/2. Its pathway is nucleotide-sugar biosynthesis; UDP-N-acetyl-alpha-D-glucosamine biosynthesis; UDP-N-acetyl-alpha-D-glucosamine from N-acetyl-alpha-D-glucosamine 1-phosphate: step 1/1. It participates in bacterial outer membrane biogenesis; LPS lipid A biosynthesis. Functionally, catalyzes the last two sequential reactions in the de novo biosynthetic pathway for UDP-N-acetylglucosamine (UDP-GlcNAc). The C-terminal domain catalyzes the transfer of acetyl group from acetyl coenzyme A to glucosamine-1-phosphate (GlcN-1-P) to produce N-acetylglucosamine-1-phosphate (GlcNAc-1-P), which is converted into UDP-GlcNAc by the transfer of uridine 5-monophosphate (from uridine 5-triphosphate), a reaction catalyzed by the N-terminal domain. This Sodalis glossinidius (strain morsitans) protein is Bifunctional protein GlmU.